The chain runs to 614 residues: Serine/threonine-protein kinase Pkn1 (614 aa).

The 264-residue stretch at 13-276 folds into the Protein kinase domain; the sequence is YKVIAELGHG…TSGEQLQVTL (264 aa). ATP contacts are provided by residues 19–27 and lysine 42; that span reads LGHGLWSRD.

The protein belongs to the protein kinase superfamily. Ser/Thr protein kinase family. As to quaternary structure, interacts with PknD, interacts with and phosphorylates IncG. In terms of processing, autophosphorylates on serine and threonine residues. Present in elementary bodies 40 hours post-infection as 2 proteins of approximately 70 and 65 kDa; the smaller one may be due to differential phosphorylation or degradation.

The enzyme catalyses L-seryl-[protein] + ATP = O-phospho-L-seryl-[protein] + ADP + H(+). It carries out the reaction L-threonyl-[protein] + ATP = O-phospho-L-threonyl-[protein] + ADP + H(+). In terms of biological role, together with the serine/threonine kinase PknD, may play a role in specific interactions with host proteins during host intracellular growth. Autophosphorylates and phosphorylates IncG, an inclusion-membrane protein required for the modification of the nascent chlamydial inclusion. In Chlamydia trachomatis serovar L2 (strain ATCC VR-902B / DSM 19102 / 434/Bu), this protein is Serine/threonine-protein kinase Pkn1 (pkn1).